The chain runs to 64 residues: Large ribosomal subunit protein bL33 (64 aa).

The protein belongs to the bacterial ribosomal protein bL33 family.

This chain is Large ribosomal subunit protein bL33, found in Synechococcus sp. (strain WH7803).